Here is a 300-residue protein sequence, read N- to C-terminus: RNA polymerase sigma factor RpoH (300 aa).

Positions 53-122 (LVTSHLRLVA…IQEYILRSWS (70 aa)) are sigma-70 factor domain-2. The short motif at 77 to 80 (EVVS) is the Interaction with polymerase core subunit RpoC element. Residues 231–282 (AMGVLNDRERRIFEARRLAEDPVTLEELSSEFDISRERVRQIEVRAFEKVQE) form a sigma-70 factor domain-4 region. Positions 255-274 (LEELSSEFDISRERVRQIEV) form a DNA-binding region, H-T-H motif.

Belongs to the sigma-70 factor family. RpoH subfamily. Interacts with the RNA polymerase core enzyme.

It localises to the cytoplasm. In terms of biological role, sigma factors are initiation factors that promote the attachment of RNA polymerase to specific initiation sites and are then released. This sigma factor is involved in regulation of expression of heat shock genes. In Rhizobium radiobacter (Agrobacterium tumefaciens), this protein is RNA polymerase sigma factor RpoH.